Reading from the N-terminus, the 130-residue chain is S-adenosylmethionine decarboxylase proenzyme (130 aa).

The active-site Schiff-base intermediate with substrate; via pyruvic acid is serine 63. A Pyruvic acid (Ser); by autocatalysis modification is found at serine 63. Catalysis depends on histidine 68, which acts as the Proton acceptor; for processing activity. The active-site Proton donor; for catalytic activity is cysteine 83.

It belongs to the prokaryotic AdoMetDC family. Type 1 subfamily. As to quaternary structure, heterotetramer of two alpha and two beta chains arranged as a dimer of alpha/beta heterodimers. The cofactor is pyruvate. Post-translationally, is synthesized initially as an inactive proenzyme. Formation of the active enzyme involves a self-maturation process in which the active site pyruvoyl group is generated from an internal serine residue via an autocatalytic post-translational modification. Two non-identical subunits are generated from the proenzyme in this reaction, and the pyruvate is formed at the N-terminus of the alpha chain, which is derived from the carboxyl end of the proenzyme. The post-translation cleavage follows an unusual pathway, termed non-hydrolytic serinolysis, in which the side chain hydroxyl group of the serine supplies its oxygen atom to form the C-terminus of the beta chain, while the remainder of the serine residue undergoes an oxidative deamination to produce ammonia and the pyruvoyl group blocking the N-terminus of the alpha chain.

The enzyme catalyses S-adenosyl-L-methionine + H(+) = S-adenosyl 3-(methylsulfanyl)propylamine + CO2. The protein operates within amine and polyamine biosynthesis; S-adenosylmethioninamine biosynthesis; S-adenosylmethioninamine from S-adenosyl-L-methionine: step 1/1. Its function is as follows. Catalyzes the decarboxylation of S-adenosylmethionine to S-adenosylmethioninamine (dcAdoMet), the propylamine donor required for the synthesis of the polyamines spermine and spermidine from the diamine putrescine. The chain is S-adenosylmethionine decarboxylase proenzyme from Thermosipho africanus (strain TCF52B).